Reading from the N-terminus, the 343-residue chain is Anthranilate phosphoribosyltransferase (343 aa).

5-phospho-alpha-D-ribose 1-diphosphate-binding positions include G86, 89–90 (GD), T94, 96–99 (NIST), 114–122 (KHGNKSASG), and S126. G86 contributes to the anthranilate binding site. S98 provides a ligand contact to Mg(2+). Residue N117 coordinates anthranilate. An anthranilate-binding site is contributed by R172. Mg(2+) is bound by residues D231 and E232.

Belongs to the anthranilate phosphoribosyltransferase family. Homodimer. Mg(2+) serves as cofactor.

It carries out the reaction N-(5-phospho-beta-D-ribosyl)anthranilate + diphosphate = 5-phospho-alpha-D-ribose 1-diphosphate + anthranilate. Its pathway is amino-acid biosynthesis; L-tryptophan biosynthesis; L-tryptophan from chorismate: step 2/5. In terms of biological role, catalyzes the transfer of the phosphoribosyl group of 5-phosphorylribose-1-pyrophosphate (PRPP) to anthranilate to yield N-(5'-phosphoribosyl)-anthranilate (PRA). The chain is Anthranilate phosphoribosyltransferase from Prochlorococcus marinus subsp. pastoris (strain CCMP1986 / NIES-2087 / MED4).